The sequence spans 110 residues: Large ribosomal subunit protein uL22 (110 aa).

This sequence belongs to the universal ribosomal protein uL22 family. As to quaternary structure, part of the 50S ribosomal subunit.

This protein binds specifically to 23S rRNA; its binding is stimulated by other ribosomal proteins, e.g. L4, L17, and L20. It is important during the early stages of 50S assembly. It makes multiple contacts with different domains of the 23S rRNA in the assembled 50S subunit and ribosome. In terms of biological role, the globular domain of the protein is located near the polypeptide exit tunnel on the outside of the subunit, while an extended beta-hairpin is found that lines the wall of the exit tunnel in the center of the 70S ribosome. In Teredinibacter turnerae (strain ATCC 39867 / T7901), this protein is Large ribosomal subunit protein uL22.